We begin with the raw amino-acid sequence, 160 residues long: Large ribosomal subunit protein uL22c (160 aa).

This sequence belongs to the universal ribosomal protein uL22 family. Part of the 50S ribosomal subunit.

It localises to the plastid. Its subcellular location is the chloroplast. This protein binds specifically to 23S rRNA. Its function is as follows. The globular domain of the protein is located near the polypeptide exit tunnel on the outside of the subunit, while an extended beta-hairpin is found that lines the wall of the exit tunnel in the center of the 70S ribosome. The polypeptide is Large ribosomal subunit protein uL22c (rpl22) (Olimarabidopsis pumila (Dwarf rocket)).